The primary structure comprises 123 residues: Ig heavy chain V region HPCG14 (123 aa).

One can recognise an Ig-like domain in the interval 1–114 (EVKLVESGGG…GYDYWFDVWG (114 aa)).

This chain is Ig heavy chain V region HPCG14, found in Mus musculus (Mouse).